A 566-amino-acid polypeptide reads, in one-letter code: Glutamate--tRNA ligase (566 aa).

Residues P105–N115 carry the 'HIGH' region motif.

The protein belongs to the class-I aminoacyl-tRNA synthetase family. Glutamate--tRNA ligase type 2 subfamily.

The protein localises to the cytoplasm. The enzyme catalyses tRNA(Glu) + L-glutamate + ATP = L-glutamyl-tRNA(Glu) + AMP + diphosphate. Functionally, catalyzes the attachment of glutamate to tRNA(Glu) in a two-step reaction: glutamate is first activated by ATP to form Glu-AMP and then transferred to the acceptor end of tRNA(Glu). This Sulfurisphaera tokodaii (strain DSM 16993 / JCM 10545 / NBRC 100140 / 7) (Sulfolobus tokodaii) protein is Glutamate--tRNA ligase.